The chain runs to 478 residues: Adenylosuccinate lyase (478 aa).

Substrate is bound by residues 14-15 (RY), 81-83 (KHD), and 107-108 (TS). The active-site Proton donor/acceptor is His-155. Residue Gln-237 participates in substrate binding. The active-site Proton donor/acceptor is the Ser-285. Substrate contacts are provided by Arg-299, Arg-325, Ser-330, and Arg-334.

It belongs to the lyase 1 family. Adenylosuccinate lyase subfamily. As to quaternary structure, homotetramer. Residues from neighboring subunits contribute catalytic and substrate-binding residues to each active site.

It carries out the reaction N(6)-(1,2-dicarboxyethyl)-AMP = fumarate + AMP. It catalyses the reaction (2S)-2-[5-amino-1-(5-phospho-beta-D-ribosyl)imidazole-4-carboxamido]succinate = 5-amino-1-(5-phospho-beta-D-ribosyl)imidazole-4-carboxamide + fumarate. Its pathway is purine metabolism; AMP biosynthesis via de novo pathway; AMP from IMP: step 2/2. The protein operates within purine metabolism; IMP biosynthesis via de novo pathway; 5-amino-1-(5-phospho-D-ribosyl)imidazole-4-carboxamide from 5-amino-1-(5-phospho-D-ribosyl)imidazole-4-carboxylate: step 2/2. In terms of biological role, catalyzes two non-sequential steps in de novo AMP synthesis: converts (S)-2-(5-amino-1-(5-phospho-D-ribosyl)imidazole-4-carboxamido)succinate (SAICAR) to fumarate plus 5-amino-1-(5-phospho-D-ribosyl)imidazole-4-carboxamide, and thereby also contributes to de novo IMP synthesis, and converts succinyladenosine monophosphate (SAMP) to AMP and fumarate. The sequence is that of Adenylosuccinate lyase from Caenorhabditis briggsae.